Here is a 306-residue protein sequence, read N- to C-terminus: Agmatinase (306 aa).

Mn(2+)-binding residues include His-126, Asp-149, His-151, Asp-153, Asp-230, and Asp-232.

Belongs to the arginase family. Agmatinase subfamily. Mn(2+) serves as cofactor.

The catalysed reaction is agmatine + H2O = urea + putrescine. It functions in the pathway amine and polyamine biosynthesis; putrescine biosynthesis via agmatine pathway; putrescine from agmatine: step 1/1. Catalyzes the formation of putrescine from agmatine. The sequence is that of Agmatinase from Shigella dysenteriae serotype 1 (strain Sd197).